A 276-amino-acid chain; its full sequence is NAC domain-containing protein 67 (276 aa).

The NAC domain occupies 17-170 (LPPGFRFHPT…DWVLCRLYNK (154 aa)).

Expressed in leaf blades.

Its subcellular location is the nucleus. Probable transcription factor involved in stress response. This is NAC domain-containing protein 67 from Oryza sativa subsp. japonica (Rice).